The sequence spans 99 residues: UPF0213 protein PC1_0597 (99 aa).

The region spanning 8–83 is the GIY-YIG domain; it reads PQWYLYILRT…KQLSKNQKER (76 aa).

This sequence belongs to the UPF0213 family.

The chain is UPF0213 protein PC1_0597 from Pectobacterium carotovorum subsp. carotovorum (strain PC1).